Here is a 145-residue protein sequence, read N- to C-terminus: 3-dehydroquinate dehydratase (145 aa).

Tyrosine 22 functions as the Proton acceptor in the catalytic mechanism. Substrate-binding residues include asparagine 71, histidine 77, and aspartate 84. The active-site Proton donor is histidine 97. Substrate is bound by residues 98 to 99 and arginine 108; that span reads LS.

Belongs to the type-II 3-dehydroquinase family. In terms of assembly, homododecamer.

It catalyses the reaction 3-dehydroquinate = 3-dehydroshikimate + H2O. Its pathway is metabolic intermediate biosynthesis; chorismate biosynthesis; chorismate from D-erythrose 4-phosphate and phosphoenolpyruvate: step 3/7. In terms of biological role, catalyzes a trans-dehydration via an enolate intermediate. The chain is 3-dehydroquinate dehydratase from Francisella tularensis subsp. mediasiatica (strain FSC147).